The sequence spans 361 residues: 3-dehydroquinate synthase (361 aa).

NAD(+) contacts are provided by residues 72-77 (SGEKEK), 130-131 (TT), K142, and K151. Zn(2+) is bound by residues E184, H247, and H264.

The protein belongs to the sugar phosphate cyclases superfamily. Dehydroquinate synthase family. Co(2+) serves as cofactor. It depends on Zn(2+) as a cofactor. NAD(+) is required as a cofactor.

It localises to the cytoplasm. The catalysed reaction is 7-phospho-2-dehydro-3-deoxy-D-arabino-heptonate = 3-dehydroquinate + phosphate. The protein operates within metabolic intermediate biosynthesis; chorismate biosynthesis; chorismate from D-erythrose 4-phosphate and phosphoenolpyruvate: step 2/7. Functionally, catalyzes the conversion of 3-deoxy-D-arabino-heptulosonate 7-phosphate (DAHP) to dehydroquinate (DHQ). This Bacillus cereus (strain G9842) protein is 3-dehydroquinate synthase.